Here is a 509-residue protein sequence, read N- to C-terminus: Aspartic proteinase oryzasin-1 (509 aa).

The signal sequence occupies residues methionine 1–alanine 24. Positions alanine 25–glycine 67 are cleaved as a propeptide — activation peptide. The region spanning tyrosine 85 to alanine 506 is the Peptidase A1 domain. Aspartate 103 is a catalytic residue. Cysteine 116 and cysteine 122 are disulfide-bonded. N-linked (GlcNAc...) asparagine glycosylation occurs at asparagine 252. A disulfide bridge connects residues cysteine 281 and cysteine 285. Residue aspartate 290 is part of the active site. The Saposin B-type domain occupies valine 315–proline 420. Cystine bridges form between cysteine 320–cysteine 414, cysteine 345–cysteine 386, cysteine 351–cysteine 383, and cysteine 428–cysteine 465. The N-linked (GlcNAc...) asparagine glycan is linked to asparagine 400.

It belongs to the peptidase A1 family.

It is found in the vacuole. Involved in the breakdown of propeptides of storage proteins in protein-storage vacuoles. The chain is Aspartic proteinase oryzasin-1 from Oryza sativa subsp. japonica (Rice).